Here is an 833-residue protein sequence, read N- to C-terminus: Glycerol-3-phosphate acyltransferase (833 aa).

Residues 309–314 carry the HXXXXD motif motif; that stretch reads CHRSHI.

Belongs to the GPAT/DAPAT family.

The protein localises to the cell inner membrane. The catalysed reaction is sn-glycerol 3-phosphate + an acyl-CoA = a 1-acyl-sn-glycero-3-phosphate + CoA. It participates in phospholipid metabolism; CDP-diacylglycerol biosynthesis; CDP-diacylglycerol from sn-glycerol 3-phosphate: step 1/3. This Pseudomonas syringae pv. syringae (strain B728a) protein is Glycerol-3-phosphate acyltransferase.